The following is a 132-amino-acid chain: D-ribose pyranase (132 aa).

His-20 (proton donor) is an active-site residue. Substrate-binding positions include Asp-28, His-99, and 121–123 (YSN).

It belongs to the RbsD / FucU family. RbsD subfamily. In terms of assembly, homodecamer.

Its subcellular location is the cytoplasm. It catalyses the reaction beta-D-ribopyranose = beta-D-ribofuranose. It functions in the pathway carbohydrate metabolism; D-ribose degradation; D-ribose 5-phosphate from beta-D-ribopyranose: step 1/2. Catalyzes the interconversion of beta-pyran and beta-furan forms of D-ribose. In Streptococcus agalactiae serotype V (strain ATCC BAA-611 / 2603 V/R), this protein is D-ribose pyranase.